The following is a 489-amino-acid chain: Corticosteroid-binding protein (489 aa).

It to yeast FMS1.

May be a flavoprotein with enzymatic activity. The chain is Corticosteroid-binding protein (CBP1) from Candida albicans (strain SC5314 / ATCC MYA-2876) (Yeast).